Here is a 249-residue protein sequence, read N- to C-terminus: NAD(P)H-quinone oxidoreductase subunit K 2 (249 aa).

Residues Cys54, Cys55, Cys119, and Cys150 each coordinate [4Fe-4S] cluster.

This sequence belongs to the complex I 20 kDa subunit family. NDH-1 can be composed of about 15 different subunits; different subcomplexes with different compositions have been identified which probably have different functions. [4Fe-4S] cluster is required as a cofactor.

The protein localises to the cell inner membrane. It catalyses the reaction a plastoquinone + NADH + (n+1) H(+)(in) = a plastoquinol + NAD(+) + n H(+)(out). It carries out the reaction a plastoquinone + NADPH + (n+1) H(+)(in) = a plastoquinol + NADP(+) + n H(+)(out). Its function is as follows. NDH-1 shuttles electrons from an unknown electron donor, via FMN and iron-sulfur (Fe-S) centers, to quinones in the respiratory and/or the photosynthetic chain. The immediate electron acceptor for the enzyme in this species is believed to be plastoquinone. Couples the redox reaction to proton translocation, and thus conserves the redox energy in a proton gradient. Cyanobacterial NDH-1 also plays a role in inorganic carbon-concentration. This is NAD(P)H-quinone oxidoreductase subunit K 2 from Gloeobacter violaceus (strain ATCC 29082 / PCC 7421).